A 264-amino-acid chain; its full sequence is Phosphonoacetaldehyde hydrolase (264 aa).

Residue aspartate 9 is the Nucleophile of the active site. Mg(2+)-binding residues include aspartate 9 and alanine 11. The active-site Schiff-base intermediate with substrate is lysine 50. Residue aspartate 183 participates in Mg(2+) binding.

Belongs to the HAD-like hydrolase superfamily. PhnX family. Homodimer. The cofactor is Mg(2+).

It carries out the reaction phosphonoacetaldehyde + H2O = acetaldehyde + phosphate + H(+). Functionally, involved in phosphonate degradation. In Bacillus cereus (strain ATCC 10987 / NRS 248), this protein is Phosphonoacetaldehyde hydrolase.